A 225-amino-acid polypeptide reads, in one-letter code: Uracil-DNA glycosylase (225 aa).

The active-site Proton acceptor is the Asp61.

Belongs to the uracil-DNA glycosylase (UDG) superfamily. UNG family.

Its subcellular location is the cytoplasm. The enzyme catalyses Hydrolyzes single-stranded DNA or mismatched double-stranded DNA and polynucleotides, releasing free uracil.. Excises uracil residues from the DNA which can arise as a result of misincorporation of dUMP residues by DNA polymerase or due to deamination of cytosine. This is Uracil-DNA glycosylase from Actinobacillus pleuropneumoniae serotype 5b (strain L20).